The sequence spans 421 residues: Outer capsid protein P8 (421 aa).

The protein belongs to the phytoreovirus outer capsid protein P8 family. Homotrimer. Homomultimer. Interacts with host peroxisomal glycolate oxidase (GOX). This interaction mediates its relocation to virus factories peripheral to host peroxisomes.

It localises to the virion. The protein resides in the host cytoplasm. Functionally, capsid protein which self-assembles to form the outer icosahedral capsid with a T=13 symmetry, about 70 nm in diameter and consisting of 780 molecules capsid proteins. In Alopecurus aequalis (Barnyard grass), this protein is Outer capsid protein P8.